Reading from the N-terminus, the 175-residue chain is Polyadenylate-binding protein-interacting protein 6 (175 aa).

The PAM2-like motif lies at T7–P17. Residues E83 to I126 enclose the CUE domain. A disordered region spans residues P145–S175. The span at G166–S175 shows a compositional bias: polar residues.

This chain is Polyadenylate-binding protein-interacting protein 6 (CID6), found in Arabidopsis thaliana (Mouse-ear cress).